A 204-amino-acid chain; its full sequence is MITVALPKGRIAEDTLEIFRKIFGSSFMFEDRKLILEEGNFRFLMVRNQDIPTYVTEGAADIGVVGLDVLEEHKPNVVRLLDLQIGKCKVCIGIKNEEELDFSRSELKIATKMPNITRNYFAKLAVGVKIIKLYGSIELAPLVGLSDAIVDVVETGSTMKQNGLKVAGDIMQSSAYLIANKNSFIIKKDEILELYQKIKDEISK.

This sequence belongs to the ATP phosphoribosyltransferase family. Short subfamily. In terms of assembly, heteromultimer composed of HisG and HisZ subunits.

Its subcellular location is the cytoplasm. It carries out the reaction 1-(5-phospho-beta-D-ribosyl)-ATP + diphosphate = 5-phospho-alpha-D-ribose 1-diphosphate + ATP. Its pathway is amino-acid biosynthesis; L-histidine biosynthesis; L-histidine from 5-phospho-alpha-D-ribose 1-diphosphate: step 1/9. Catalyzes the condensation of ATP and 5-phosphoribose 1-diphosphate to form N'-(5'-phosphoribosyl)-ATP (PR-ATP). Has a crucial role in the pathway because the rate of histidine biosynthesis seems to be controlled primarily by regulation of HisG enzymatic activity. This is ATP phosphoribosyltransferase from Campylobacter concisus (strain 13826).